The chain runs to 316 residues: tRNA selenocysteine 1-associated protein 1-like (316 aa).

2 RRM domains span residues Thr6–Tyr89 and Phe99–Asn178. Over residues Pro239–Pro248 the composition is skewed to pro residues. The disordered stretch occupies residues Pro239–Met285.

This sequence belongs to the RRM TRSPAP family.

The protein localises to the nucleus. It is found in the cytoplasm. Functionally, involved in the early steps of selenocysteine biosynthesis and tRNA(Sec) charging to the later steps resulting in the cotranslational incorporation of selenocysteine into selenoproteins. In Danio rerio (Zebrafish), this protein is tRNA selenocysteine 1-associated protein 1-like (trnau1apl).